A 132-amino-acid chain; its full sequence is MAGTFTLRVVSPEGNVLKEEAEFVVLPGGNGEIGILPNHAPLISSIEIGVIRYTVNGKVEKIATSGGFVEVSDNKVTILADTAEPGERVDLDRALAAKERAEKRLTQREGIDVRRAELALMRAVARINAARN.

The protein belongs to the ATPase epsilon chain family. F-type ATPases have 2 components, CF(1) - the catalytic core - and CF(0) - the membrane proton channel. CF(1) has five subunits: alpha(3), beta(3), gamma(1), delta(1), epsilon(1). CF(0) has three main subunits: a, b and c.

It is found in the cell membrane. Its function is as follows. Produces ATP from ADP in the presence of a proton gradient across the membrane. The sequence is that of ATP synthase epsilon chain from Desulfitobacterium hafniense (strain DSM 10664 / DCB-2).